The primary structure comprises 230 residues: Cytochrome c oxidase subunit 2 (230 aa).

Over 1–14 the chain is Mitochondrial intermembrane; sequence MAHPSQLGFQDAAS. A helical membrane pass occupies residues 15 to 45; it reads PVMEELLHFHDHALMIVFLISTLVLYIIAAT. At 46 to 59 the chain is on the mitochondrial matrix side; it reads ASTKLTDKYILDSQ. A helical transmembrane segment spans residues 60–87; sequence EIEVIWTIMPAVILILIALPSLRILYLM. At 88-230 the chain is on the mitochondrial intermembrane side; it reads DEINDPHLTV…NWSSLMLEDA (143 aa). Cu cation is bound by residues H161, C196, E198, C200, H204, and M207. E198 is a Mg(2+) binding site.

The protein belongs to the cytochrome c oxidase subunit 2 family. Component of the cytochrome c oxidase (complex IV, CIV), a multisubunit enzyme composed of 14 subunits. The complex is composed of a catalytic core of 3 subunits MT-CO1, MT-CO2 and MT-CO3, encoded in the mitochondrial DNA, and 11 supernumerary subunits COX4I, COX5A, COX5B, COX6A, COX6B, COX6C, COX7A, COX7B, COX7C, COX8 and NDUFA4, which are encoded in the nuclear genome. The complex exists as a monomer or a dimer and forms supercomplexes (SCs) in the inner mitochondrial membrane with NADH-ubiquinone oxidoreductase (complex I, CI) and ubiquinol-cytochrome c oxidoreductase (cytochrome b-c1 complex, complex III, CIII), resulting in different assemblies (supercomplex SCI(1)III(2)IV(1) and megacomplex MCI(2)III(2)IV(2)). Found in a complex with TMEM177, COA6, COX18, COX20, SCO1 and SCO2. Interacts with TMEM177 in a COX20-dependent manner. Interacts with COX20. Interacts with COX16. Cu cation serves as cofactor.

It is found in the mitochondrion inner membrane. The catalysed reaction is 4 Fe(II)-[cytochrome c] + O2 + 8 H(+)(in) = 4 Fe(III)-[cytochrome c] + 2 H2O + 4 H(+)(out). Component of the cytochrome c oxidase, the last enzyme in the mitochondrial electron transport chain which drives oxidative phosphorylation. The respiratory chain contains 3 multisubunit complexes succinate dehydrogenase (complex II, CII), ubiquinol-cytochrome c oxidoreductase (cytochrome b-c1 complex, complex III, CIII) and cytochrome c oxidase (complex IV, CIV), that cooperate to transfer electrons derived from NADH and succinate to molecular oxygen, creating an electrochemical gradient over the inner membrane that drives transmembrane transport and the ATP synthase. Cytochrome c oxidase is the component of the respiratory chain that catalyzes the reduction of oxygen to water. Electrons originating from reduced cytochrome c in the intermembrane space (IMS) are transferred via the dinuclear copper A center (CU(A)) of subunit 2 and heme A of subunit 1 to the active site in subunit 1, a binuclear center (BNC) formed by heme A3 and copper B (CU(B)). The BNC reduces molecular oxygen to 2 water molecules using 4 electrons from cytochrome c in the IMS and 4 protons from the mitochondrial matrix. The chain is Cytochrome c oxidase subunit 2 (mt-co2) from Tetraodon nigroviridis (Spotted green pufferfish).